The primary structure comprises 485 residues: Keratin, type I cytoskeletal 14 (485 aa).

Residues 1–15 (MATCSRQFTSSSSMK) are compositionally biased toward polar residues. Residues 1–21 (MATCSRQFTSSSSMKGSCGIG) form a disordered region. Positions 1-121 (MATCSRQFTS…GLGDGLLVGS (121 aa)) are head. A coil 1A region spans residues 122 to 157 (EKVTMQNLNDRLATYLDKVRALEEANSDLEVKIRDW). The 312-residue stretch at 122–433 (EKVTMQNLND…RLLEGEDAHL (312 aa)) folds into the IF rod domain. A linker 1 region spans residues 158-175 (YQRQRPTEIKDYSPYFKT). A coil 1B region spans residues 176 to 267 (IEDLKSKILA…KNHEEEMASM (92 aa)). Residues 268–290 (RGQVGGDVNVEMDAAPGVDLSRI) form a linker 12 region. The segment at 291–429 (LNEMRDQYEK…ATYRRLLEGE (139 aa)) is coil 2. Residues 430–485 (DAHLSSAQFSSSSQFSSGSQSSRDVTSTNRQIRTKVMDVHDGKVVSTHEQVLRTKN) are tail. Residues 432-485 (HLSSAQFSSSSQFSSGSQSSRDVTSTNRQIRTKVMDVHDGKVVSTHEQVLRTKN) are interaction with Type I keratins and keratin filaments. Over residues 437–451 (QFSSSSQFSSGSQSS) the composition is skewed to low complexity. Residues 437-458 (QFSSSSQFSSGSQSSRDVTSTN) are disordered. Serine 448 is subject to Phosphoserine.

The protein belongs to the intermediate filament family. Heterotetramer of two type I and two type II keratins. Forms a disulfide-linked heterodimer (via 2B domains) with KRT5 (via 2B domains). Forms a heterodimer with KRT1; the interaction is more abundant in the absence of KRT5. Interacts with TRADD and with keratin filaments. Associates with other type I keratins. Interacts with EPPK1. Interacts with KLHL24. Interacts with PKP1 (via N-terminus) and PKP2. In terms of processing, a disulfide bond is formed between rather than within filaments and promotes the formation of a keratin filament cage around the nucleus. Post-translationally, ubiquitinated by the BCR(KLHL24) E3 ubiquitin ligase complex. As to expression, expressed in most cells of squamous cell carcinomas, in spinous and suprabasal cells around the branching papillary region of papillomas, and weakly in a few proliferative cells of hyperplastic tissue.

The protein resides in the cytoplasm. It is found in the nucleus. Functionally, the nonhelical tail domain is involved in promoting KRT5-KRT14 filaments to self-organize into large bundles and enhances the mechanical properties involved in resilience of keratin intermediate filaments in vitro. This Rattus norvegicus (Rat) protein is Keratin, type I cytoskeletal 14 (Krt14).